The following is a 159-amino-acid chain: Small ribosomal subunit protein bS6 (159 aa).

Basic and acidic residues predominate over residues 93–151 (VDEHEEGPSAMMRKADRDRERDDRGPREGGFRGDREGRGDREGGGFRGDRGPRRPREDA). The tract at residues 93-159 (VDEHEEGPSA…DADTAAASEE (67 aa)) is disordered.

The protein belongs to the bacterial ribosomal protein bS6 family.

Functionally, binds together with bS18 to 16S ribosomal RNA. This is Small ribosomal subunit protein bS6 from Rhodopseudomonas palustris (strain HaA2).